The primary structure comprises 415 residues: Serine hydroxymethyltransferase 2 (415 aa).

(6S)-5,6,7,8-tetrahydrofolate-binding positions include L121 and G125 to L127. K229 bears the N6-(pyridoxal phosphate)lysine mark.

It belongs to the SHMT family. Homodimer. Pyridoxal 5'-phosphate serves as cofactor.

The protein resides in the cytoplasm. The catalysed reaction is (6R)-5,10-methylene-5,6,7,8-tetrahydrofolate + glycine + H2O = (6S)-5,6,7,8-tetrahydrofolate + L-serine. Its pathway is one-carbon metabolism; tetrahydrofolate interconversion. It participates in amino-acid biosynthesis; glycine biosynthesis; glycine from L-serine: step 1/1. In terms of biological role, catalyzes the reversible interconversion of serine and glycine with tetrahydrofolate (THF) serving as the one-carbon carrier. This reaction serves as the major source of one-carbon groups required for the biosynthesis of purines, thymidylate, methionine, and other important biomolecules. Also exhibits THF-independent aldolase activity toward beta-hydroxyamino acids, producing glycine and aldehydes, via a retro-aldol mechanism. The sequence is that of Serine hydroxymethyltransferase 2 from Bordetella parapertussis (strain 12822 / ATCC BAA-587 / NCTC 13253).